The sequence spans 441 residues: MKITVRSSTVVVPAAETPRVRLWNANPDLVVPRFHTPSVYFYRRGGEDGGDACYFDAGRMRRALAEALVPFYPMAGRLAHDEDGRVEIDCNAEGVLFVEADAPDGAVDDFGDFVPTMGLKRLIPTVDFTGGISSYPLLVVQVTHFKCGGVALGIAMQHHVADGFSGLHFINSWSDLCRGVPIAVMPFIDRTLLRARDPPVPTHPHIEYQPAPAMLGSEEPQALAGKPESPPTAVDIFKLSRSDLGRLRAQLPTGEGAPRFSTYAVLGAHVWRCASLARGLAPEQPTKLYCATDGRQRLTPTHPDGYFGNVIFTATPLAEAGKVTGSLADGATTIQDALEKMDDEYCHSALDYLELQPDLSALVRGAHTFRCPNLGLTSWVRLPIHDADFGWGRPVFMGPGGIAYEGLAFVLPSANRDGSLSVAISLQAEHMEKFRKMIFDF.

Active-site proton acceptor residues include His-158 and Asp-388.

This sequence belongs to the plant acyltransferase family.

It catalyses the reaction 5-hydroxyanthranilate + (E)-4-coumaroyl-CoA = avenanthramide A + CoA. The catalysed reaction is 5-hydroxyanthranilate + (E)-caffeoyl-CoA = avenanthramide C + CoA. In terms of biological role, involved in the biosynthesis of avenanthramide phytoalexins, which are phenolic alkaloids found mainly in oats. Catalyzes the N-acylation of 5-hydroxyanthranilate with 4-coumaroyl-CoA or caffeoyl-CoA as acyl donors, forming avenanthramide A and avenanthramide C, respectively. Does not accept feruloyl-CoA as a substrate. The sequence is that of Hydroxycinnamoyl-CoA:5-hydroxyanthranilate N-hydroxycinnamoyltransferase HHT1 from Avena sativa (Oat).